The sequence spans 375 residues: Carbamoyl phosphate synthase small chain (375 aa).

The CPSase stretch occupies residues 1–184 (MVSLYLENGL…LDYKPFDEKT (184 aa)). Positions 44, 240, and 242 each coordinate L-glutamine. The 188-residue stretch at 188-375 (IIAVLDFGAK…KEFVELLKDF (188 aa)) folds into the Glutamine amidotransferase type-1 domain. The Nucleophile role is filled by Cys-268. Leu-269, Gln-272, Asn-310, and Tyr-313 together coordinate L-glutamine. Active-site residues include His-351 and Glu-353.

The protein belongs to the CarA family. Composed of two chains; the small (or glutamine) chain promotes the hydrolysis of glutamine to ammonia, which is used by the large (or ammonia) chain to synthesize carbamoyl phosphate. Tetramer of heterodimers (alpha,beta)4.

It catalyses the reaction hydrogencarbonate + L-glutamine + 2 ATP + H2O = carbamoyl phosphate + L-glutamate + 2 ADP + phosphate + 2 H(+). The catalysed reaction is L-glutamine + H2O = L-glutamate + NH4(+). It functions in the pathway amino-acid biosynthesis; L-arginine biosynthesis; carbamoyl phosphate from bicarbonate: step 1/1. Its pathway is pyrimidine metabolism; UMP biosynthesis via de novo pathway; (S)-dihydroorotate from bicarbonate: step 1/3. Functionally, small subunit of the glutamine-dependent carbamoyl phosphate synthetase (CPSase). CPSase catalyzes the formation of carbamoyl phosphate from the ammonia moiety of glutamine, carbonate, and phosphate donated by ATP, constituting the first step of 2 biosynthetic pathways, one leading to arginine and/or urea and the other to pyrimidine nucleotides. The small subunit (glutamine amidotransferase) binds and cleaves glutamine to supply the large subunit with the substrate ammonia. The sequence is that of Carbamoyl phosphate synthase small chain from Helicobacter pylori (strain ATCC 700392 / 26695) (Campylobacter pylori).